A 336-amino-acid chain; its full sequence is Mediator of RNA polymerase II transcription subunit 4 (336 aa).

2 disordered regions span residues 1-45 and 59-85; these read MNST…SNVV and NVEE…QDEA. The stretch at 154–192 forms a coiled coil; it reads QQAAQTIAALERVSEGLDDKIRDMIRKLAECRRELRNYQ. Residues 281–336 form a disordered region; that stretch reads PVANGVAQNHNNGYAMERRLSTGYGSDNDGDTNMNGRSGLAGLDIFDDDDDDDDDD. Residues 325-336 are compositionally biased toward acidic residues; it reads IFDDDDDDDDDD.

This sequence belongs to the Mediator complex subunit 4 family. As to quaternary structure, component of the Mediator complex.

The protein resides in the nucleus. Functionally, component of the Mediator complex, a coactivator involved in the regulated transcription of nearly all RNA polymerase II-dependent genes. Mediator functions as a bridge to convey information from gene-specific regulatory proteins to the basal RNA polymerase II transcription machinery. Mediator is recruited to promoters by direct interactions with regulatory proteins and serves as a scaffold for the assembly of a functional preinitiation complex with RNA polymerase II and the general transcription factors. The polypeptide is Mediator of RNA polymerase II transcription subunit 4 (MED4) (Yarrowia lipolytica (strain CLIB 122 / E 150) (Yeast)).